The primary structure comprises 494 residues: Monocarboxylate transporter 1 (494 aa).

At 1-22 (MPPAIGGPVGYTPPDGGWGWAV) the chain is on the cytoplasmic side. The helical transmembrane segment at 23–44 (VVGAFISIGFSYAFPKSITVFF) threads the bilayer. Position 38 (lysine 38) interacts with (S)-lactate. The Extracellular segment spans residues 45-55 (KEIEIIFSATT). The helical transmembrane segment at 56 to 80 (SEVSWISSIMLAVMYAGGPISSILV) threads the bilayer. Over 81–84 (NKYG) the chain is Cytoplasmic. Residues 85-105 (SRPVMIAGGCLSGCGLIAASF) form a helical membrane-spanning segment. Over 106-109 (CNTV) the chain is Extracellular. Residues 110 to 132 (QELYFCIGVIGGLGLAFNLNPAL) traverse the membrane as a helical segment. Topologically, residues 133-146 (TMIGKYFYKKRPLA) are cytoplasmic. A helical membrane pass occupies residues 147-169 (NGLAMAGSPVFLSTLAPLNQAFF). Topologically, residues 170 to 174 (GIFGW) are extracellular. A helical transmembrane segment spans residues 175-194 (RGSFLILGGLLLNCCVAGSL). Residues 195 to 254 (MRPIGPQQGKVEKLKSKESLQEAGKSDANTDLIGGSPKGEKLSVFQTVNKFLDLSLFTHR) are Cytoplasmic-facing. Phosphoserine is present on residues serine 210, serine 213, and serine 220. Threonine 224 is subject to Phosphothreonine. Residue serine 230 is modified to Phosphoserine. A helical transmembrane segment spans residues 255–281 (GFLLYLSGNVVMFFGLFTPLVFLSNYG). Topologically, residues 282–288 (KSKHFSS) are extracellular. Residues 289 to 310 (EKSAFLLSILAFVDMVARPSMG) traverse the membrane as a helical segment. Aspartate 302 contributes to the H(+) binding site. Arginine 306 provides a ligand contact to (S)-lactate. Over 311 to 321 (LAANTRWIRPR) the chain is Cytoplasmic. A helical transmembrane segment spans residues 322–342 (VQYFFAASVVANGVCHLLAPL). Topologically, residues 343 to 346 (STTY) are extracellular. A helical membrane pass occupies residues 347–368 (VGFCIYAGVFGFAFGWLSSVLF). The Cytoplasmic segment spans residues 369-382 (ETLMDLVGPQRFSS). Residues 383–403 (AVGLVTIVECCPVLLGPPLLG) form a helical membrane-spanning segment. Residues 404-414 (RLNDMYGDYKY) lie on the Extracellular side of the membrane. A helical membrane pass occupies residues 415 to 436 (TYWACGVILIIAGLYLFIGMGI). The Cytoplasmic portion of the chain corresponds to 437–494 (NYRLVAKEQKAEEKKRDGKEDETSTDVDEKPKKTMKETQSPAPLQNSSGDPAEEESPV). Residues 446–472 (KAEEKKRDGKEDETSTDVDEKPKKTMK) are compositionally biased toward basic and acidic residues. Residues 446–494 (KAEEKKRDGKEDETSTDVDEKPKKTMKETQSPAPLQNSSGDPAEEESPV) are disordered. Position 459 is a phosphothreonine (threonine 459). Position 460 is a phosphoserine (serine 460). A Phosphothreonine modification is found at threonine 461. A compositionally biased stretch (polar residues) spans 473-485 (ETQSPAPLQNSSG). Residues serine 476, serine 483, serine 484, and serine 492 each carry the phosphoserine modification.

It belongs to the major facilitator superfamily. Monocarboxylate porter (TC 2.A.1.13) family. Interacts with BSG. Interacts with EMB. Interaction with either BSG or EMB is required for expression at the cell membrane. Detected in erythrocytes (at protein level). Detected in brain, heart, kidney, lung, muscle, jejunum enterocytes and brain capillaries.

The protein localises to the cell membrane. It is found in the basolateral cell membrane. Its subcellular location is the apical cell membrane. It catalyses the reaction (S)-lactate(in) + H(+)(in) = (S)-lactate(out) + H(+)(out). It carries out the reaction pyruvate(out) + H(+)(out) = pyruvate(in) + H(+)(in). The enzyme catalyses acetoacetate(out) + H(+)(out) = acetoacetate(in) + H(+)(in). The catalysed reaction is (S)-3-hydroxybutanoate(out) + H(+)(out) = (S)-3-hydroxybutanoate(in) + H(+)(in). It catalyses the reaction (R)-3-hydroxybutanoate(out) + H(+)(out) = (R)-3-hydroxybutanoate(in) + H(+)(in). It carries out the reaction 3-methyl-2-oxobutanoate(out) + H(+)(out) = 3-methyl-2-oxobutanoate(in) + H(+)(in). The enzyme catalyses 4-methyl-2-oxopentanoate(out) + H(+)(out) = 4-methyl-2-oxopentanoate(in) + H(+)(in). With respect to regulation, inhibited by stilbene disulfonates, such as di-isothiocyanostilbene disulfonate(DIDS), a cross-linking reagent that forms covalent linkages with lysine groups. Functionally, bidirectional proton-coupled monocarboxylate transporter. Catalyzes the rapid transport across the plasma membrane of many monocarboxylates such as lactate, pyruvate, acetate and the ketone bodies acetoacetate and beta-hydroxybutyrate, and thus contributes to the maintenance of intracellular pH. The transport direction is determined by the proton motive force and the concentration gradient of the substrate monocarboxylate. MCT1 is a major lactate exporter. Plays a role in cellular responses to a high-fat diet by modulating the cellular levels of lactate and pyruvate that contribute to the regulation of central metabolic pathways and insulin secretion, with concomitant effects on plasma insulin levels and blood glucose homeostasis. Facilitates the protonated monocarboxylate form of succinate export, that its transient protonation upon muscle cell acidification in exercising muscle and ischemic heart. Functions via alternate outward- and inward-open conformation states. Protonation and deprotonation of 302-Asp is essential for the conformational transition. This Rattus norvegicus (Rat) protein is Monocarboxylate transporter 1 (Slc16a1).